The chain runs to 413 residues: Gamma-glutamyl phosphate reductase (413 aa).

It belongs to the gamma-glutamyl phosphate reductase family.

The protein localises to the cytoplasm. The catalysed reaction is L-glutamate 5-semialdehyde + phosphate + NADP(+) = L-glutamyl 5-phosphate + NADPH + H(+). It participates in amino-acid biosynthesis; L-proline biosynthesis; L-glutamate 5-semialdehyde from L-glutamate: step 2/2. Functionally, catalyzes the NADPH-dependent reduction of L-glutamate 5-phosphate into L-glutamate 5-semialdehyde and phosphate. The product spontaneously undergoes cyclization to form 1-pyrroline-5-carboxylate. This Lactococcus lactis subsp. cremoris (strain MG1363) protein is Gamma-glutamyl phosphate reductase.